The chain runs to 950 residues: UvrABC system protein A (950 aa).

42–49 is an ATP binding site; that stretch reads GLSGSGKS. A C4-type zinc finger spans residues 262–289; that stretch reads CPVCSYSLPELEPRLFSFNNPMGSCPTC. 2 ABC transporter domains span residues 319–596 and 616–945; these read WDKR…EKSV and VNPG…KYLK. 649-656 serves as a coordination point for ATP; that stretch reads GVSGSGKS. The segment at 748–774 adopts a C4-type zinc-finger fold; that stretch reads CEACQGDGVIKVEMHFLPDVYVPCEVC.

It belongs to the ABC transporter superfamily. UvrA family. In terms of assembly, forms a heterotetramer with UvrB during the search for lesions.

It localises to the cytoplasm. The UvrABC repair system catalyzes the recognition and processing of DNA lesions. UvrA is an ATPase and a DNA-binding protein. A damage recognition complex composed of 2 UvrA and 2 UvrB subunits scans DNA for abnormalities. When the presence of a lesion has been verified by UvrB, the UvrA molecules dissociate. In Neisseria gonorrhoeae, this protein is UvrABC system protein A.